Consider the following 649-residue polypeptide: DNA mismatch repair protein MutL (649 aa).

This sequence belongs to the DNA mismatch repair MutL/HexB family.

Its function is as follows. This protein is involved in the repair of mismatches in DNA. It is required for dam-dependent methyl-directed DNA mismatch repair. May act as a 'molecular matchmaker', a protein that promotes the formation of a stable complex between two or more DNA-binding proteins in an ATP-dependent manner without itself being part of a final effector complex. The protein is DNA mismatch repair protein MutL of Streptococcus pneumoniae serotype 19F (strain G54).